The following is a 321-amino-acid chain: Nucleotide-binding protein LI0459 (321 aa).

41–48 (GMSGAGKS) lines the ATP pocket.

This sequence belongs to the RapZ-like family.

Displays ATPase and GTPase activities. This chain is Nucleotide-binding protein LI0459, found in Lawsonia intracellularis (strain PHE/MN1-00).